Reading from the N-terminus, the 150-residue chain is Large ribosomal subunit protein bL9 (150 aa).

The protein belongs to the bacterial ribosomal protein bL9 family.

Its function is as follows. Binds to the 23S rRNA. This chain is Large ribosomal subunit protein bL9, found in Stenotrophomonas maltophilia (strain R551-3).